Here is a 428-residue protein sequence, read N- to C-terminus: Sialidase-3 (428 aa).

Positions 24-27 (YRIP) match the FRIP motif motif. Residues Arg25 and Arg45 each coordinate substrate. Asp50 (proton acceptor) is an active-site residue. One copy of the BNR 1 repeat lies at 129-140 (ICSQDAGYSWSD). Substrate is bound by residues Tyr179 and Tyr181. Residues 203-214 (IYSDDLGATWHH) form a BNR 2 repeat. Positions 225 and 245 each coordinate substrate. The stretch at 254-265 (ALSIDHGECFQK) is one BNR 3 repeat. A Phosphoserine modification is found at Ser314. Arg341 contributes to the substrate binding site. The active-site Nucleophile is the Tyr371. The active site involves Glu388.

Belongs to the glycosyl hydrolase 33 family. Interacts with CAV1; this interaction enhances NEU3 sialidase activity within caveola. Interacts with EGFR; this interaction mediates desialylation of EGFR and enhances downstream signaling. Palmitoylated; may regulate intracellular trafficking and anchorage to plasma membrane and endomembranes. As to expression, expressed in brain.

It is found in the cell membrane. The protein resides in the membrane. The protein localises to the caveola. Its subcellular location is the early endosome membrane. It localises to the recycling endosome membrane. It is found in the lysosome membrane. It catalyses the reaction Hydrolysis of alpha-(2-&gt;3)-, alpha-(2-&gt;6)-, alpha-(2-&gt;8)- glycosidic linkages of terminal sialic acid residues in oligosaccharides, glycoproteins, glycolipids, colominic acid and synthetic substrates.. The enzyme catalyses a ganglioside GD1a + H2O = a ganglioside GM1 + N-acetylneuraminate. The catalysed reaction is a ganglioside GD1a (d18:1(4E)) + H2O = a ganglioside GM1 (d18:1(4E)) + N-acetylneuraminate. It carries out the reaction a ganglioside GD1b + H2O = a ganglioside GM1 + N-acetylneuraminate. It catalyses the reaction a ganglioside GD1b (d18:1(4E)) + H2O = a ganglioside GM1 (d18:1(4E)) + N-acetylneuraminate. The enzyme catalyses a ganglioside GD3 + H2O = a ganglioside GM3 + N-acetylneuraminate. The catalysed reaction is a ganglioside GD3 (d18:1(4E)) + H2O = a ganglioside GM3 (d18:1(4E)) + N-acetylneuraminate. It carries out the reaction a ganglioside GM3 + H2O = a beta-D-galactosyl-(1-&gt;4)-beta-D-glucosyl-(1&lt;-&gt;1)-ceramide + N-acetylneuraminate. It catalyses the reaction a ganglioside GM1 + H2O = a ganglioside GA1 + N-acetylneuraminate. The enzyme catalyses a ganglioside GM1 (d18:1(4E)) + H2O = a ganglioside GA1 (d18:1(4E)) + N-acetylneuraminate. The catalysed reaction is a ganglioside GM2 (d18:1(4E)) + H2O = a ganglioside GA2 (d18:1(4E)) + N-acetylneuraminate. It carries out the reaction a ganglioside GM3 (d18:1(4E)) + H2O = a beta-D-Gal-(1-&gt;4)-beta-D-Glc-(1&lt;-&gt;1)-Cer(d18:1(4E)) + N-acetylneuraminate. It catalyses the reaction a ganglioside GT1b + H2O = a ganglioside GD1b + N-acetylneuraminate. In terms of biological role, exo-alpha-sialidase that catalyzes the hydrolytic cleavage of the terminal sialic acid (N-acetylneuraminic acid, Neu5Ac) of a glycan moiety in the catabolism of glycolipids, glycoproteins and oligosacharides. Displays high catalytic efficiency for gangliosides including alpha-(2-&gt;3)-sialylated GD1a and GM3 and alpha-(2-&gt;8)-sialylated GD3. Plays a role in the regulation of transmembrane signaling through the modulation of ganglioside content of the lipid bilayer and by direct interaction with signaling receptors, such as EGFR. Desialylates EGFR and activates downstream signaling in proliferating cells. Contributes to clathrin-mediated endocytosis by regulating sorting of endocytosed receptors to early and recycling endosomes. This is Sialidase-3 (NEU3) from Bos taurus (Bovine).